The sequence spans 119 residues: Large ribosomal subunit protein bL20c (119 aa).

The protein belongs to the bacterial ribosomal protein bL20 family.

Its subcellular location is the plastid. It is found in the chloroplast. In terms of biological role, binds directly to 23S ribosomal RNA and is necessary for the in vitro assembly process of the 50S ribosomal subunit. It is not involved in the protein synthesizing functions of that subunit. This Triticum aestivum (Wheat) protein is Large ribosomal subunit protein bL20c.